The chain runs to 171 residues: S-ribosylhomocysteine lyase (171 aa).

His-54, His-58, and Cys-128 together coordinate Fe cation.

It belongs to the LuxS family. Homodimer. Fe cation serves as cofactor.

It catalyses the reaction S-(5-deoxy-D-ribos-5-yl)-L-homocysteine = (S)-4,5-dihydroxypentane-2,3-dione + L-homocysteine. Involved in the synthesis of autoinducer 2 (AI-2) which is secreted by bacteria and is used to communicate both the cell density and the metabolic potential of the environment. The regulation of gene expression in response to changes in cell density is called quorum sensing. Catalyzes the transformation of S-ribosylhomocysteine (RHC) to homocysteine (HC) and 4,5-dihydroxy-2,3-pentadione (DPD). In Yersinia pseudotuberculosis serotype O:1b (strain IP 31758), this protein is S-ribosylhomocysteine lyase.